A 217-amino-acid polypeptide reads, in one-letter code: Translation initiation factor IF-3 (217 aa).

The protein belongs to the IF-3 family. As to quaternary structure, monomer.

It is found in the cytoplasm. IF-3 binds to the 30S ribosomal subunit and shifts the equilibrium between 70S ribosomes and their 50S and 30S subunits in favor of the free subunits, thus enhancing the availability of 30S subunits on which protein synthesis initiation begins. This chain is Translation initiation factor IF-3, found in Synechococcus sp. (strain CC9902).